The chain runs to 215 residues: Cytidylate kinase (215 aa).

11 to 19 (GPTASGKGT) contributes to the ATP binding site.

Belongs to the cytidylate kinase family. Type 1 subfamily.

Its subcellular location is the cytoplasm. The enzyme catalyses CMP + ATP = CDP + ADP. It catalyses the reaction dCMP + ATP = dCDP + ADP. The chain is Cytidylate kinase from Polynucleobacter necessarius subsp. necessarius (strain STIR1).